The sequence spans 395 residues: ATP phosphoribosyltransferase regulatory subunit (395 aa).

Belongs to the class-II aminoacyl-tRNA synthetase family. HisZ subfamily. Heteromultimer composed of HisG and HisZ subunits.

The protein localises to the cytoplasm. It participates in amino-acid biosynthesis; L-histidine biosynthesis; L-histidine from 5-phospho-alpha-D-ribose 1-diphosphate: step 1/9. Its function is as follows. Required for the first step of histidine biosynthesis. May allow the feedback regulation of ATP phosphoribosyltransferase activity by histidine. The sequence is that of ATP phosphoribosyltransferase regulatory subunit from Pseudomonas putida (strain ATCC 700007 / DSM 6899 / JCM 31910 / BCRC 17059 / LMG 24140 / F1).